The sequence spans 89 residues: MSLEKASKAAIVADNARGQNDTGSPEVQVALLTARINELNSHFKAHTKDHHSRRGLIMMVNRRKSLLSYLKGKDATRYRDLIVKLGLRK.

It belongs to the universal ribosomal protein uS15 family. As to quaternary structure, part of the 30S ribosomal subunit. Forms a bridge to the 50S subunit in the 70S ribosome, contacting the 23S rRNA.

Functionally, one of the primary rRNA binding proteins, it binds directly to 16S rRNA where it helps nucleate assembly of the platform of the 30S subunit by binding and bridging several RNA helices of the 16S rRNA. Its function is as follows. Forms an intersubunit bridge (bridge B4) with the 23S rRNA of the 50S subunit in the ribosome. This Janthinobacterium sp. (strain Marseille) (Minibacterium massiliensis) protein is Small ribosomal subunit protein uS15.